The primary structure comprises 93 residues: Small ribosomal subunit protein bS18 (93 aa).

A compositionally biased stretch (basic residues) spans 1-11 (MAPSARNRKPG). Residues 1-27 (MAPSARNRKPGARSMAKAAALRKPKKK) are disordered.

It belongs to the bacterial ribosomal protein bS18 family. As to quaternary structure, part of the 30S ribosomal subunit. Forms a tight heterodimer with protein bS6.

Functionally, binds as a heterodimer with protein bS6 to the central domain of the 16S rRNA, where it helps stabilize the platform of the 30S subunit. The chain is Small ribosomal subunit protein bS18 from Salinispora tropica (strain ATCC BAA-916 / DSM 44818 / JCM 13857 / NBRC 105044 / CNB-440).